The chain runs to 126 residues: Small ribosomal subunit protein uS13 (126 aa).

A disordered region spans residues 95–126 (GLPVRGQRTRTNARTRKGPRKTVAGKKKAPRK).

Belongs to the universal ribosomal protein uS13 family. In terms of assembly, part of the 30S ribosomal subunit. Forms a loose heterodimer with protein S19. Forms two bridges to the 50S subunit in the 70S ribosome.

Its function is as follows. Located at the top of the head of the 30S subunit, it contacts several helices of the 16S rRNA. In the 70S ribosome it contacts the 23S rRNA (bridge B1a) and protein L5 of the 50S subunit (bridge B1b), connecting the 2 subunits; these bridges are implicated in subunit movement. Contacts the tRNAs in the A and P-sites. This chain is Small ribosomal subunit protein uS13 (rpsM), found in Thermus thermophilus (strain ATCC BAA-163 / DSM 7039 / HB27).